We begin with the raw amino-acid sequence, 172 residues long: Adenine phosphoribosyltransferase (172 aa).

The protein belongs to the purine/pyrimidine phosphoribosyltransferase family. In terms of assembly, homodimer.

The protein resides in the cytoplasm. It catalyses the reaction AMP + diphosphate = 5-phospho-alpha-D-ribose 1-diphosphate + adenine. It functions in the pathway purine metabolism; AMP biosynthesis via salvage pathway; AMP from adenine: step 1/1. Functionally, catalyzes a salvage reaction resulting in the formation of AMP, that is energically less costly than de novo synthesis. The protein is Adenine phosphoribosyltransferase of Clostridium botulinum (strain Alaska E43 / Type E3).